Here is a 536-residue protein sequence, read N- to C-terminus: Phosphoenolpyruvate carboxykinase (ATP) (536 aa).

R61, Y195, and K201 together coordinate substrate. Residues K201, H220, and 236 to 244 contribute to the ATP site; that span reads GLSGTGKTT. Mn(2+) is bound by residues K201 and H220. D257 provides a ligand contact to Mn(2+). ATP is bound by residues E285, R322, and T447. R322 lines the substrate pocket.

This sequence belongs to the phosphoenolpyruvate carboxykinase (ATP) family. Mn(2+) is required as a cofactor.

It localises to the cytoplasm. It carries out the reaction oxaloacetate + ATP = phosphoenolpyruvate + ADP + CO2. Its pathway is carbohydrate biosynthesis; gluconeogenesis. Functionally, involved in the gluconeogenesis. Catalyzes the conversion of oxaloacetate (OAA) to phosphoenolpyruvate (PEP) through direct phosphoryl transfer between the nucleoside triphosphate and OAA. This chain is Phosphoenolpyruvate carboxykinase (ATP), found in Brucella melitensis biotype 1 (strain ATCC 23456 / CCUG 17765 / NCTC 10094 / 16M).